The following is a 540-amino-acid chain: MPPAVPAAAATARQSASGRERNFKDKDKPESVRNSNIVAAKAVADAVRTSLGPRGMDKMIQSGNGDVTITNDGATILNQMSVIHPTAKMLVELSKAQDIEAGDGTTTVVVMAGALLDAAQNLLSKGIHPTTISESFQSAAAEAEKILDEMSSPVDLSNDALLNKMATTSLNSKVVSQHSWLLAPMAVNAVKKIINSENDSNVNLKMIKIIKKMGDTVEESELIEGALIDQKTMGRGAPTRIEKAKIGLIQFQISPPKTDMENQVIITDYAQMDRALKEERQYLLEICKQIKAAGCNVLLIQKSILRDAVNELALHFLAKMKIMCIKDIEREDIEFYSRILGCRPVASVDHFNADALGYADLVEEIPTGGDGKVIKVTGVQNPGHAVSILLRGSNKLVLEEADRSIHDALCVIRCLVKKKALLPGGGAPEMEIAVKLRNLAQTQHGATQYCWRAFADALELIPYTLAENAGLSPIHTVTELRNNHANGNSSYGVNVRKGYVTDMVEEDVVQPLLVTASAIKQASECVRSILKIDDIVMAVR.

The span at 1-12 shows a compositional bias: low complexity; it reads MPPAVPAAAATA. A disordered region spans residues 1-32; sequence MPPAVPAAAATARQSASGRERNFKDKDKPESV. Over residues 18–31 the composition is skewed to basic and acidic residues; it reads GRERNFKDKDKPES.

This sequence belongs to the TCP-1 chaperonin family. In terms of assembly, heterooligomeric complex of about 850 to 900 kDa that forms two stacked rings, 12 to 16 nm in diameter.

Its subcellular location is the cytoplasm. In terms of biological role, molecular chaperone; assists the folding of proteins upon ATP hydrolysis. Known to play a role, in vitro, in the folding of actin and tubulin. This chain is T-complex protein 1 subunit delta (cct-4), found in Caenorhabditis elegans.